A 367-amino-acid chain; its full sequence is Avirulence protein ATR5 (367 aa).

Positions 1-16 (MRLISPALVVSTAIQA) are cleaved as a signal peptide. Asn20 carries an N-linked (GlcNAc...) asparagine glycan. Residues 33–65 (NPLASAHPPDVGYDGVPAGRVRNPDDPTTEERT) form a disordered region. Over residues 54 to 65 (RNPDDPTTEERT) the composition is skewed to basic and acidic residues. Positions 61–64 (TEER) match the dEER motif.

This sequence belongs to the RxLR effector family.

The protein resides in the secreted. It is found in the host cell. Its function is as follows. Secreted effector that acts as an elicitor of hypersensitive response (HR) specifically on plants carrying defense protein RPP5. This is Avirulence protein ATR5 from Hyaloperonospora arabidopsidis (strain Emoy2) (Downy mildew agent).